The sequence spans 501 residues: Alveolysin (501 aa).

An N-terminal signal peptide occupies residues 1–32; the sequence is MKKKSNHLKGRKVLVSLLVSLQVFAFASISSA. The next 4 beta stranded transmembrane spans lie at 191-204, 211-220, 289-298, and 306-318; these read QNQI…NAKV, IDFNAVANGE, SNDVQTAFKL, and QASG…YENS. A Conserved undecapeptide motif is present at residues 460–470; sequence ECTGLAWEWWR. A Cholesterol binding motif is present at residues 492–493; the sequence is TL.

The protein belongs to the cholesterol-dependent cytolysin family. In terms of assembly, homooligomeric pore complex of 35 to 50 subunits; when inserted in the host membrane.

The protein resides in the secreted. It localises to the host cell membrane. Inhibited by cholesterol and thiol reagents. A cholesterol-dependent toxin that causes cytolysis by forming pores in cholesterol containing host membranes. After binding to target membranes, the protein undergoes a major conformation change, leading to its insertion in the host membrane and formation of an oligomeric pore complex. Cholesterol is required for binding to host cell membranes, membrane insertion and pore formation; cholesterol binding is mediated by a Thr-Leu pair in the C-terminus. Can be reversibly inactivated by oxidation. The sequence is that of Alveolysin (alv) from Paenibacillus alvei (Bacillus alvei).